The following is a 409-amino-acid chain: Elongation factor Tu (409 aa).

Residues 10 to 214 form the tr-type G domain; sequence KPHVNIGTIG…EVDGYIPQPE (205 aa). Residues 19–26 are G1; the sequence is GHVDHGKT. 19–26 is a binding site for GTP; that stretch reads GHVDHGKT. Thr26 serves as a coordination point for Mg(2+). Positions 60 to 64 are G2; that stretch reads GITIN. The tract at residues 81-84 is G3; the sequence is DCPG. Residues 81–85 and 136–139 each bind GTP; these read DCPGH and NKQD. The tract at residues 136-139 is G4; sequence NKQD. Positions 174-176 are G5; sequence SAL.

Belongs to the TRAFAC class translation factor GTPase superfamily. Classic translation factor GTPase family. EF-Tu/EF-1A subfamily. Monomer.

The protein localises to the cytoplasm. The enzyme catalyses GTP + H2O = GDP + phosphate + H(+). In terms of biological role, GTP hydrolase that promotes the GTP-dependent binding of aminoacyl-tRNA to the A-site of ribosomes during protein biosynthesis. In Trichodesmium erythraeum (strain IMS101), this protein is Elongation factor Tu.